Consider the following 291-residue polypeptide: ATP synthase gamma chain (291 aa).

This sequence belongs to the ATPase gamma chain family. As to quaternary structure, F-type ATPases have 2 components, CF(1) - the catalytic core - and CF(0) - the membrane proton channel. CF(1) has five subunits: alpha(3), beta(3), gamma(1), delta(1), epsilon(1). CF(0) has three main subunits: a, b and c.

It localises to the cell inner membrane. In terms of biological role, produces ATP from ADP in the presence of a proton gradient across the membrane. The gamma chain is believed to be important in regulating ATPase activity and the flow of protons through the CF(0) complex. The chain is ATP synthase gamma chain from Chlorobium phaeobacteroides (strain DSM 266 / SMG 266 / 2430).